Reading from the N-terminus, the 284-residue chain is Tropomyosin alpha-1 chain (284 aa).

Residues 1–38 (MDAIKKKMQMLKLDKENALDRAEQAEADKKGAEDKSKQ) are disordered. Positions 1–284 (MDAIKKKMQM…DHALNDMTSI (284 aa)) form a coiled coil. Residues 12–38 (KLDKENALDRAEQAEADKKGAEDKSKQ) are compositionally biased toward basic and acidic residues.

The protein belongs to the tropomyosin family. As to quaternary structure, homodimer. Heterodimer of an alpha (TPM1, TPM3 or TPM4) and a beta (TPM2) chain.

Its subcellular location is the cytoplasm. It localises to the cytoskeleton. Its function is as follows. Binds to actin filaments in muscle and non-muscle cells. Plays a central role, in association with the troponin complex, in the calcium dependent regulation of vertebrate striated muscle contraction. Smooth muscle contraction is regulated by interaction with caldesmon. In non-muscle cells is implicated in stabilizing cytoskeleton actin filaments. This Xenopus laevis (African clawed frog) protein is Tropomyosin alpha-1 chain (tpm1).